We begin with the raw amino-acid sequence, 870 residues long: Leucine--tRNA ligase (870 aa).

A 'HIGH' region motif is present at residues 55-65; sequence PYPSGTLHMGH. Residues 626 to 630 carry the 'KMSKS' region motif; it reads KMSKS. Lysine 629 lines the ATP pocket.

The protein belongs to the class-I aminoacyl-tRNA synthetase family.

Its subcellular location is the cytoplasm. The catalysed reaction is tRNA(Leu) + L-leucine + ATP = L-leucyl-tRNA(Leu) + AMP + diphosphate. The sequence is that of Leucine--tRNA ligase from Prochlorococcus marinus (strain SARG / CCMP1375 / SS120).